Reading from the N-terminus, the 152-residue chain is Cell division protein SepF (152 aa).

Residues 23–32 (EVAREPEPMQ) show a composition bias toward basic and acidic residues. The segment at 23-42 (EVAREPEPMQKKTKKEKPSK) is disordered.

It belongs to the SepF family. In terms of assembly, homodimer. Interacts with FtsZ.

It is found in the cytoplasm. Its function is as follows. Cell division protein that is part of the divisome complex and is recruited early to the Z-ring. Probably stimulates Z-ring formation, perhaps through the cross-linking of FtsZ protofilaments. Its function overlaps with FtsA. In Listeria welshimeri serovar 6b (strain ATCC 35897 / DSM 20650 / CCUG 15529 / CIP 8149 / NCTC 11857 / SLCC 5334 / V8), this protein is Cell division protein SepF.